Here is a 332-residue protein sequence, read N- to C-terminus: Acetyl-coenzyme A carboxylase carboxyl transferase subunit beta (332 aa).

A CoA carboxyltransferase N-terminal domain is found at 24–293; that stretch reads LWIKCPDSGH…PEVIVESEPE (270 aa). The disordered stretch occupies residues 288–332; it reads VESEPEPEPEPVVAEIIPPTSDLPVSAPAPAPVAAQTPAPAAPSA. Residues 298-332 are compositionally biased toward low complexity; sequence PVVAEIIPPTSDLPVSAPAPAPVAAQTPAPAAPSA.

Belongs to the AccD/PCCB family. In terms of assembly, acetyl-CoA carboxylase is a heterohexamer composed of biotin carboxyl carrier protein (AccB), biotin carboxylase (AccC) and two subunits each of ACCase subunit alpha (AccA) and ACCase subunit beta (AccD).

The protein localises to the cytoplasm. The catalysed reaction is N(6)-carboxybiotinyl-L-lysyl-[protein] + acetyl-CoA = N(6)-biotinyl-L-lysyl-[protein] + malonyl-CoA. It participates in lipid metabolism; malonyl-CoA biosynthesis; malonyl-CoA from acetyl-CoA: step 1/1. In terms of biological role, component of the acetyl coenzyme A carboxylase (ACC) complex. Biotin carboxylase (BC) catalyzes the carboxylation of biotin on its carrier protein (BCCP) and then the CO(2) group is transferred by the transcarboxylase to acetyl-CoA to form malonyl-CoA. In Rhodopseudomonas palustris (strain BisB18), this protein is Acetyl-coenzyme A carboxylase carboxyl transferase subunit beta.